Reading from the N-terminus, the 61-residue chain is Photosystem II reaction center protein K (61 aa).

A propeptide spanning residues Met-1–Ala-24 is cleaved from the precursor. The helical transmembrane segment at Ile-32 to Phe-52 threads the bilayer.

This sequence belongs to the PsbK family. As to quaternary structure, PSII is composed of 1 copy each of membrane proteins PsbA, PsbB, PsbC, PsbD, PsbE, PsbF, PsbH, PsbI, PsbJ, PsbK, PsbL, PsbM, PsbT, PsbX, PsbY, PsbZ, Psb30/Ycf12, at least 3 peripheral proteins of the oxygen-evolving complex and a large number of cofactors. It forms dimeric complexes.

It localises to the plastid. Its subcellular location is the chloroplast thylakoid membrane. Its function is as follows. One of the components of the core complex of photosystem II (PSII). PSII is a light-driven water:plastoquinone oxidoreductase that uses light energy to abstract electrons from H(2)O, generating O(2) and a proton gradient subsequently used for ATP formation. It consists of a core antenna complex that captures photons, and an electron transfer chain that converts photonic excitation into a charge separation. The polypeptide is Photosystem II reaction center protein K (Sorghum bicolor (Sorghum)).